The sequence spans 161 residues: Transcriptional repressor NrdR (161 aa).

A zinc finger lies at 3-34 (CPYCGARDARVIDSRELNGGESIRRRRECIAC). Residues 49–139 (LMVVKRDGRR…VYRRFADLED (91 aa)) form the ATP-cone domain.

It belongs to the NrdR family. Zn(2+) is required as a cofactor.

In terms of biological role, negatively regulates transcription of bacterial ribonucleotide reductase nrd genes and operons by binding to NrdR-boxes. The sequence is that of Transcriptional repressor NrdR from Thermomicrobium roseum (strain ATCC 27502 / DSM 5159 / P-2).